Reading from the N-terminus, the 1066-residue chain is MIKEPEFRDYTPGKLEEKIEEFWKENNIYQKIKELRKNGPKYYFLDGPPYVSGAIHLGTAWNKIIKDMIIRFRTMQGYNVWRQPGFDMHGLPIEVKVEQALGLKTKKEIEEKIGVENFIKKCKEFALNNLKIMTEQFKMLGIWMDWDDPYMTIKNEYIESAWFTLKKAWEKGLLEKDKRVLHWCPRCETALAEHEVRGEYKLRKDPSIYVKFPIEGKENEYLLIWTTTPWTLPANLAVSAHPEYDYVKVKVEFNGKEEYWILAKALVDKVLGEIGVKGEVIEEFKGRELEGLRYIHVLMDEYPRQKEFREKYEWAHRIILADFVTLEEGTGLVHTAPGHGEEDFEVGKKYGLPIYSPVDDQGRYVEGKWKGIYVKEADPQIIEHLKEKGYLVKAGEIEHKYPHCWRCKTPLIFRATDQWFLKVSKVKDRIIKENDEKVTWYPDWVKIRFDNGVRDSGDWVISRQRYWGIPLPIWQSEDGEIYVVGSWRELVELAVAIEVNGERIDLPESYEEKLKVIEEKLGPEDLHRPYVDAFIIKVNGKEMRRVKDVVDVWFDSGIASWASLGYPRNKELFEKLWPADFIVEGEDQVTKWFYSQQAASVIAFDTVPYRRVAMHGYVLDEKGDKMSKSLGNIIRPEEVVEKAGRDTFRFYMLWATNPWENLKFSWKGVEQVRRMLNILWNVYVLSATYMSLDNFDPRNVKVEELAFREEDKWILSRVNSLIREVENGIETFYLTKATRALYNFVVEDLSRWYVRLIRKRLWVEGDDPDKLAAYYTLWKVFDVLLRLMAPFTPYITEEIYQNLMRPFIGIESVHMLDWPKVDESAVDEDLEKEMEFIRRIVEAGSAARQKARIKLRYPVRKIIIETQDETVKKAVERLNYILRDQLNAKEVVIGKVERELTVKPNFAKVGPEFKGDSRLVAKWINEHGLELYEKGEVDVEIEGKKFHLTREHIIVEEKLPDFLVAEDFEGGRVYVDKTLTRELLAEGLAREFVRRIQEMRKRLDLDVNDRIVVTIETTDDNRELLQENLDYIMRETRAIEVRFEEAKGYVVEWPEVQAKIGIEKVE.

Positions 49-59 match the 'HIGH' region motif; sequence PYVSGAIHLGT. A 'KMSKS' region motif is present at residues 625–629; that stretch reads KMSKS. Position 628 (Lys628) interacts with ATP.

This sequence belongs to the class-I aminoacyl-tRNA synthetase family. IleS type 2 subfamily. Monomer. Requires Zn(2+) as cofactor.

The protein resides in the cytoplasm. It catalyses the reaction tRNA(Ile) + L-isoleucine + ATP = L-isoleucyl-tRNA(Ile) + AMP + diphosphate. In terms of biological role, catalyzes the attachment of isoleucine to tRNA(Ile). As IleRS can inadvertently accommodate and process structurally similar amino acids such as valine, to avoid such errors it has two additional distinct tRNA(Ile)-dependent editing activities. One activity is designated as 'pretransfer' editing and involves the hydrolysis of activated Val-AMP. The other activity is designated 'posttransfer' editing and involves deacylation of mischarged Val-tRNA(Ile). The chain is Isoleucine--tRNA ligase from Pyrococcus horikoshii (strain ATCC 700860 / DSM 12428 / JCM 9974 / NBRC 100139 / OT-3).